A 792-amino-acid polypeptide reads, in one-letter code: Glucocorticoid receptor (792 aa).

Positions 1–15 (MDSKESLAPPGRDEV) are enriched in basic and acidic residues. The interval 1 to 25 (MDSKESLAPPGRDEVPSSLLGRGRG) is disordered. A modulating region spans residues 1-436 (MDSKESLAPP…STATGPPPKL (436 aa)). R24 carries the post-translational modification Omega-N-methylarginine. The residue at position 46 (S46) is a Phosphoserine. Residues 67–98 (SKGSASNAQQQQQQQQQQQQQQQQQPQPDLSK) are disordered. Over residues 75-94 (QQQQQQQQQQQQQQQQQPQP) the composition is skewed to low complexity. Phosphoserine occurs at positions 131, 152, and 159. Residues 148-162 (NRSTSRPENPKSSTP) show a composition bias toward polar residues. The disordered stretch occupies residues 148–201 (NRSTSRPENPKSSTPAAGCATPTEKEFPQTHSDPSSEQQNRKSQPGTNGGSVKL). T168 carries the post-translational modification Phosphothreonine. Positions 176-193 (QTHSDPSSEQQNRKSQPG) are enriched in polar residues. S221, S229, S243, and S284 each carry phosphoserine. Residues K294 and K310 each participate in a glycyl lysine isopeptide (Lys-Gly) (interchain with G-Cter in SUMO); alternate cross-link. Glycyl lysine isopeptide (Lys-Gly) (interchain with G-Cter in SUMO2); alternate cross-links involve residues K294 and K310. S324 and S421 each carry phosphoserine. Residues 434–509 (PKLCLVCSDE…AGMNLEARKT (76 aa)) constitute a DNA-binding region (nuclear receptor). A Glycyl lysine isopeptide (Lys-Gly) (interchain with G-Cter in ubiquitin) cross-link involves residue K435. 2 NR C4-type zinc fingers span residues 437-457 (CLVC…CGSC) and 473-497 (CAGR…YRKC). An N6-acetyllysine mark is found at K496, K508, K510, and K511. The tract at residues 501–792 (GMNLEARKTK…NIKKLLFHQK (292 aa)) is interaction with CLOCK. The tract at residues 503-538 (NLEARKTKKKIKGIQQATAGVSQDTSENANKTIVPA) is hinge. Positions 539 to 773 (ALPQLTPTLV…FPEMLAEIIT (235 aa)) constitute an NR LBD domain. The tract at residues 547-712 (LVSLLEVIEP…EIRMTYIKEL (166 aa)) is interaction with CRY1. A Glycyl lysine isopeptide (Lys-Gly) (interchain with G-Cter in SUMO) cross-link involves residue K718.

Belongs to the nuclear hormone receptor family. NR3 subfamily. As to quaternary structure, heteromultimeric cytoplasmic complex with HSP90AA1, HSPA1A/HSPA1B, and FKBP5 or another immunophilin such as PPID, STIP1, or the immunophilin homolog PPP5C. Upon ligand binding FKBP5 dissociates from the complex and FKBP4 takes its place, thereby linking the complex to dynein and mediating transport to the nucleus, where the complex dissociates. Probably forms a complex composed of chaperones HSP90 and HSP70, co-chaperones CDC37, PPP5C, TSC1 and client protein TSC2, CDK4, AKT, RAF1 and NR3C1; this complex does not contain co-chaperones STIP1/HOP and PTGES3/p23. Directly interacts with UNC45A. Binds to DNA as a homodimer, and as heterodimer with NR3C2 or the retinoid X receptor. Binds STAT5A and STAT5B homodimers and heterodimers. Interacts with NRIP1, POU2F1, POU2F2 and TRIM28. Interacts with several coactivator complexes, including the SMARCA4 complex, CREBBP/EP300, TADA2L (Ada complex) and p160 coactivators such as NCOA2 and NCOA6. Interaction with BAG1 inhibits transactivation. Interacts with HEXIM1 and TGFB1I1. Interacts with NCOA1. Interacts with NCOA3, SMARCA4, SMARCC1, SMARCD1, and SMARCE1. Interacts with CLOCK, CRY1 and CRY2 in a ligand-dependent fashion. Interacts with CIART. Interacts with RWDD3. Interacts with UBE2I/UBC9 and this interaction is enhanced in the presence of RWDD3. Interacts with GRIP1. Interacts with NR4A3 (via nuclear receptor DNA-binding domain), represses transcription activity of NR4A3 on the POMC promoter Nur response element (NurRE). Directly interacts with PNRC2 to attract and form a complex with UPF1 and DCP1A; the interaction leads to rapid mRNA degradation. Interacts with GSK3B. Interacts with FNIP1 and FNIP2. Interacts (via C-terminus) with HNRNPU (via C-terminus). Interacts with MCM3AP. Interacts (via domain NR LBD) with HSP90AA1 and HSP90AB1. In the absence of hormonal ligand, interacts with TACC1. Interacts (via NR LBD domain) with ZNF764 (via KRAB domain); the interaction regulates transcription factor activity of NR3C1 by directing its actions toward certain biologic pathways. Post-translationally, acetylation by CLOCK reduces its binding to glucocorticoid response elements and its transcriptional activity. Increased proteasome-mediated degradation in response to glucocorticoids. In terms of processing, phosphorylated in the absence of hormone; becomes hyperphosphorylated in the presence of glucocorticoids. Phosphorylated in the absence of hormone; becomes hyperphosphorylated in the presence of glucocorticoid. The Ser-221, Ser-243 and Ser-421-phosphorylated forms are mainly cytoplasmic, and the Ser-229-phosphorylated form is nuclear. Phosphorylation at Ser-229 increases transcriptional activity. Phosphorylation at Ser-221, Ser-243 and Ser-421 decreases signaling capacity. Phosphorylation at Ser-421 may protect from glucocorticoid-induced apoptosis. Phosphorylation at Ser-221 and Ser-229 is not required in regulation of chromosome segregation. May be dephosphorylated by PPP5C, attenuates NR3C1 action. Post-translationally, sumoylation at Lys-294 and Lys-310 negatively regulates its transcriptional activity. Sumoylation at Lys-718 positively regulates its transcriptional activity in the presence of RWDD3. Sumoylation at Lys-294 and Lys-310 is dispensable whereas sumoylation at Lys-718 is critical for the stimulatory effect of RWDD3 on its transcriptional activity. Heat shock increases sumoylation in a RWDD3-dependent manner. Ubiquitinated. Ubiquitination by UBR5 leads to its degradation: UBR5 specifically recognizes and binds ligand-bound NR3C1 when it is not associated with coactivators (NCOAs). In presence of NCOAs, the UBR5-degron is not accessible, preventing its ubiquitination and degradation. Expressed in spleen, kidney and liver. Expressed in a circadian manner in the liver. In terms of tissue distribution, expressed at highest level in spleen with lesser amounts in kidney and liver.

The protein resides in the cytoplasm. It localises to the nucleus. The protein localises to the mitochondrion. Its subcellular location is the cytoskeleton. It is found in the spindle. The protein resides in the microtubule organizing center. It localises to the centrosome. The protein localises to the chromosome. Its subcellular location is the nucleoplasm. Receptor for glucocorticoids (GC). Has a dual mode of action: as a transcription factor that binds to glucocorticoid response elements (GRE), both for nuclear and mitochondrial DNA, and as a modulator of other transcription factors. Affects inflammatory responses, cellular proliferation and differentiation in target tissues. Involved in chromatin remodeling. Plays a role in rapid mRNA degradation by binding to the 5' UTR of target mRNAs and interacting with PNRC2 in a ligand-dependent manner which recruits the RNA helicase UPF1 and the mRNA-decapping enzyme DCP1A, leading to RNA decay. Could act as a coactivator for STAT5-dependent transcription upon growth hormone (GH) stimulation and could reveal an essential role of hepatic GR in the control of body growth. In terms of biological role, has transcriptional activation and repression activity. Mediates glucocorticoid-induced apoptosis. Promotes accurate chromosome segregation during mitosis. May act as a tumor suppressor. May play a negative role in adipogenesis through the regulation of lipolytic and antilipogenic gene expression. Its function is as follows. Acts as a dominant negative inhibitor of isoform 1. Has intrinsic transcriptional activity independent of isoform Alpha when both isoforms are coexpressed. Loses this transcription modulator function on its own. Has no hormone-binding activity. May play a role in controlling glucose metabolism by maintaining insulin sensitivity. Reduces hepatic gluconeogenesis through down-regulation of PEPCK in an isoform Alpha-dependent manner. Directly regulates STAT1 expression in isoform Alpha-independent manner. The protein is Glucocorticoid receptor (Nr3c1) of Mus musculus (Mouse).